Here is a 129-residue protein sequence, read N- to C-terminus: UPF0146 protein VNG_2609C (129 aa).

Belongs to the UPF0146 family.

This chain is UPF0146 protein VNG_2609C, found in Halobacterium salinarum (strain ATCC 700922 / JCM 11081 / NRC-1) (Halobacterium halobium).